Here is a 98-residue protein sequence, read N- to C-terminus: Secreted LysM effector Mgx1LysM (98 aa).

Residues 1–18 (MKVTTIIAALLSVAVVDA) form the signal peptide. Disulfide bonds link cysteine 31–cysteine 89 and cysteine 62–cysteine 97. Residues 37–85 (IPYVVKKGDTLTHIAHDIYKRKVGICDLAYTNHIGKNPNLIYAGQTLLI) enclose the LysM domain. Chitin contacts are provided by glycine 44, threonine 48, asparagine 75, and isoleucine 77.

The protein belongs to the secreted LysM effector family. In terms of assembly, forms homodimers in a chitin-independent manner through interactions at the N-termini of Mgx1LysM monomers. Homodimers are further polymerized in a chitin-dependent manner.

The protein resides in the secreted. It localises to the cell wall. Its function is as follows. Secreted effector that enables the plant pathogenic fungus to manipulate host defenses for successful infection. Binds chitin and suppresses the chitin-induced reactive oxygen species (ROS) burst. Chitin-induced polymerization of homodimers forms a contiguous Mg1LysM highly oligomeric super-complexe that is anchored to the chitin in the fungal cell wall to prevent hydrolysis by host chitinases. This Zymoseptoria tritici (strain ST99CH_3D7) protein is Secreted LysM effector Mgx1LysM.